We begin with the raw amino-acid sequence, 479 residues long: Glutamyl-tRNA(Gln) amidotransferase subunit A (479 aa).

Residues K71 and S146 each act as charge relay system in the active site. S170 (acyl-ester intermediate) is an active-site residue.

It belongs to the amidase family. GatA subfamily. Heterotrimer of A, B and C subunits.

It catalyses the reaction L-glutamyl-tRNA(Gln) + L-glutamine + ATP + H2O = L-glutaminyl-tRNA(Gln) + L-glutamate + ADP + phosphate + H(+). In terms of biological role, allows the formation of correctly charged Gln-tRNA(Gln) through the transamidation of misacylated Glu-tRNA(Gln) in organisms which lack glutaminyl-tRNA synthetase. The reaction takes place in the presence of glutamine and ATP through an activated gamma-phospho-Glu-tRNA(Gln). The polypeptide is Glutamyl-tRNA(Gln) amidotransferase subunit A (Lactobacillus acidophilus (strain ATCC 700396 / NCK56 / N2 / NCFM)).